We begin with the raw amino-acid sequence, 79 residues long: Sec-independent protein translocase protein TatA (79 aa).

A helical transmembrane segment spans residues 1–21 (MGGFTSIWHWVIVLLVIVLLF). Residues 48 to 79 (EEEAKNEPKTLDAQATQTKAHESSEIKSKQES) are disordered. Positions 66–79 (KAHESSEIKSKQES) are enriched in basic and acidic residues.

The protein belongs to the TatA/E family. The Tat system comprises two distinct complexes: a TatABC complex, containing multiple copies of TatA, TatB and TatC subunits, and a separate TatA complex, containing only TatA subunits. Substrates initially bind to the TatABC complex, which probably triggers association of the separate TatA complex to form the active translocon.

It is found in the cell inner membrane. Functionally, part of the twin-arginine translocation (Tat) system that transports large folded proteins containing a characteristic twin-arginine motif in their signal peptide across membranes. TatA could form the protein-conducting channel of the Tat system. The sequence is that of Sec-independent protein translocase protein TatA from Helicobacter pylori (strain P12).